The following is a 175-amino-acid chain: NADH-ubiquinone oxidoreductase chain 6 (175 aa).

The next 5 helical transmembrane spans lie at 1-21 (MVTY…VGVS), 25-45 (SPIY…GVVL), 47-67 (FGGS…MLVV), 88-108 (VVLG…IYAL), and 149-169 (YGVW…VIIM).

This sequence belongs to the complex I subunit 6 family. As to quaternary structure, core subunit of respiratory chain NADH dehydrogenase (Complex I) which is composed of 45 different subunits.

It localises to the mitochondrion inner membrane. It carries out the reaction a ubiquinone + NADH + 5 H(+)(in) = a ubiquinol + NAD(+) + 4 H(+)(out). Functionally, core subunit of the mitochondrial membrane respiratory chain NADH dehydrogenase (Complex I) which catalyzes electron transfer from NADH through the respiratory chain, using ubiquinone as an electron acceptor. Essential for the catalytic activity and assembly of complex I. In Balaenoptera musculus (Blue whale), this protein is NADH-ubiquinone oxidoreductase chain 6 (MT-ND6).